The following is a 232-amino-acid chain: Expansin-YoaJ (232 aa).

Positions 1–25 (MKKIMSAFVGMVLLTIFCFSPQASA) are cleaved as a signal peptide. Positions 58–127 (ITAINPADLN…MKDGKINIKW (70 aa)) constitute an Expansin-like EG45 domain.

The protein localises to the secreted. Its subcellular location is the cell wall. May promote colonization of plant roots. May cause loosening and extension of plant cell walls by disrupting non-covalent bonding between cellulose microfibrils and matrix glucans. Has very low expansin activity (in vitro). No enzymatic activity has been found. Binds to peptidoglycan and to plant cell walls. This Bacillus subtilis (strain 168) protein is Expansin-YoaJ (yoaJ).